The primary structure comprises 192 residues: Adenylate kinase (192 aa).

10-15 (GAGKGT) provides a ligand contact to ATP. An NMP region spans residues 30-59 (STGDMLREVIAKETEVGKKAKAIISSGALV). AMP contacts are provided by residues Thr-31, Arg-36, 57 to 59 (ALV), 85 to 88 (GYPR), and Gln-92. Residues 126–142 (RRVQETVAAGGQVRLDD) form an LID region. Arg-127 lines the ATP pocket. AMP is bound by residues Arg-139 and Arg-150. Ile-178 is an ATP binding site.

Belongs to the adenylate kinase family. As to quaternary structure, monomer.

The protein localises to the cytoplasm. The catalysed reaction is AMP + ATP = 2 ADP. It functions in the pathway purine metabolism; AMP biosynthesis via salvage pathway; AMP from ADP: step 1/1. Catalyzes the reversible transfer of the terminal phosphate group between ATP and AMP. Plays an important role in cellular energy homeostasis and in adenine nucleotide metabolism. The polypeptide is Adenylate kinase (Bartonella tribocorum (strain CIP 105476 / IBS 506)).